The following is a 597-amino-acid chain: Elongation factor 4 (597 aa).

In terms of domain architecture, tr-type G spans 2–184 (QNIRNFSIIA…DIVKKIPAPE (183 aa)). GTP-binding positions include 14 to 19 (DHGKST) and 131 to 134 (NKID).

The protein belongs to the TRAFAC class translation factor GTPase superfamily. Classic translation factor GTPase family. LepA subfamily.

Its subcellular location is the cell inner membrane. It carries out the reaction GTP + H2O = GDP + phosphate + H(+). Required for accurate and efficient protein synthesis under certain stress conditions. May act as a fidelity factor of the translation reaction, by catalyzing a one-codon backward translocation of tRNAs on improperly translocated ribosomes. Back-translocation proceeds from a post-translocation (POST) complex to a pre-translocation (PRE) complex, thus giving elongation factor G a second chance to translocate the tRNAs correctly. Binds to ribosomes in a GTP-dependent manner. In Haemophilus ducreyi (strain 35000HP / ATCC 700724), this protein is Elongation factor 4.